Consider the following 237-residue polypeptide: Pyridoxal phosphate homeostasis protein (237 aa).

At Lys35 the chain carries N6-(pyridoxal phosphate)lysine.

Belongs to the pyridoxal phosphate-binding protein YggS/PROSC family.

Functionally, pyridoxal 5'-phosphate (PLP)-binding protein, which is involved in PLP homeostasis. This Haemophilus influenzae (strain ATCC 51907 / DSM 11121 / KW20 / Rd) protein is Pyridoxal phosphate homeostasis protein.